A 513-amino-acid polypeptide reads, in one-letter code: GMP synthase [glutamine-hydrolyzing] (513 aa).

A Glutamine amidotransferase type-1 domain is found at 3–192; sequence TVVVLDYGSQ…VSKIAKMEKN (190 aa). The active-site Nucleophile is the C80. Catalysis depends on residues H166 and E168. Residues 193–388 enclose the GMPS ATP-PPase domain; the sequence is WEMKDFVSEK…LELPQSMINR (196 aa). Residue 220 to 226 participates in ATP binding; it reads SGGVDSS.

Homodimer.

It carries out the reaction XMP + L-glutamine + ATP + H2O = GMP + L-glutamate + AMP + diphosphate + 2 H(+). It participates in purine metabolism; GMP biosynthesis; GMP from XMP (L-Gln route): step 1/1. Its function is as follows. Catalyzes the synthesis of GMP from XMP. This is GMP synthase [glutamine-hydrolyzing] from Thermosipho melanesiensis (strain DSM 12029 / CIP 104789 / BI429).